Here is a 40-residue protein sequence, read N- to C-terminus: MANTTGRVPLWLIGTVAGILVIGLVGIFFYGSYSGLGSSL.

A helical transmembrane segment spans residues 10–30; that stretch reads LWLIGTVAGILVIGLVGIFFY.

The protein belongs to the PsbJ family. In terms of assembly, PSII is composed of 1 copy each of membrane proteins PsbA, PsbB, PsbC, PsbD, PsbE, PsbF, PsbH, PsbI, PsbJ, PsbK, PsbL, PsbM, PsbT, PsbX, PsbY, PsbZ, Psb30/Ycf12, at least 3 peripheral proteins of the oxygen-evolving complex and a large number of cofactors. It forms dimeric complexes.

It localises to the plastid. It is found in the chloroplast thylakoid membrane. In terms of biological role, one of the components of the core complex of photosystem II (PSII). PSII is a light-driven water:plastoquinone oxidoreductase that uses light energy to abstract electrons from H(2)O, generating O(2) and a proton gradient subsequently used for ATP formation. It consists of a core antenna complex that captures photons, and an electron transfer chain that converts photonic excitation into a charge separation. This Marchantia polymorpha (Common liverwort) protein is Photosystem II reaction center protein J.